We begin with the raw amino-acid sequence, 217 residues long: uncharacterized protein (217 aa).

Disordered stretches follow at residues 1 to 85 (MGVK…RGNT) and 167 to 189 (KLRS…EPDE). The span at 38 to 48 (AKSDKDKRKGS) shows a compositional bias: basic and acidic residues. The segment covering 60-78 (NALPTKNLTTPPALNPLTT) has biased composition (low complexity). Basic and acidic residues predominate over residues 172 to 189 (PHKDQHNSATNKDQEPDE).

This is an uncharacterized protein from Saccharomyces cerevisiae (strain ATCC 204508 / S288c) (Baker's yeast).